Reading from the N-terminus, the 124-residue chain is MFGGGGGLNPRKMKQMMNQMGIDLEEIDAEEVVIRTADEELVFDDAEVQLMDAQGQQTYQVVGEPESRERGDSGSEDDSETESGGEFSEDDVEIVAQRAGVSESTARETLEETGDLAAAVQKLE.

In terms of domain architecture, NAC-A/B spans 7–74; that stretch reads GLNPRKMKQM…PESRERGDSG (68 aa). The segment at 53–124 is disordered; sequence AQGQQTYQVV…DLAAAVQKLE (72 aa). Positions 74–93 are enriched in acidic residues; it reads GSEDDSETESGGEFSEDDVE.

The protein belongs to the NAC-alpha family. In terms of assembly, homodimer. Interacts with the ribosome. Binds ribosomal RNA.

In terms of biological role, contacts the emerging nascent chain on the ribosome. The protein is Nascent polypeptide-associated complex protein of Natronomonas pharaonis (strain ATCC 35678 / DSM 2160 / CIP 103997 / JCM 8858 / NBRC 14720 / NCIMB 2260 / Gabara) (Halobacterium pharaonis).